The following is a 315-amino-acid chain: Shiga-like toxin 1 subunit A (315 aa).

Positions 1 to 22 are cleaved as a signal peptide; that stretch reads MKIIIFRVLTFFFVIFSVNVVA. The A1 stretch occupies residues 23–273; that stretch reads KEFTLDFSTA…CHHHASRVAR (251 aa). Residue E189 is part of the active site. Residues C264 and C283 are joined by a disulfide bond. The segment at 274 to 315 is A2; it reads MASDEFPSMCPADGRVRGITHNKILWDSSTLGAILMRRTISS.

Belongs to the ribosome-inactivating protein family. In terms of assembly, shiga-like toxin contains a single subunit A and five copies of subunit B.

The protein resides in the secreted. It catalyses the reaction Endohydrolysis of the N-glycosidic bond at one specific adenosine on the 28S rRNA.. The A subunit is responsible for inhibiting protein synthesis through the catalytic inactivation of 60S ribosomal subunits. After endocytosis, the A subunit is cleaved by furin in two fragments, A1 and A2: A1 is the catalytically active fragment, and A2 is essential for holotoxin assembly with the B subunits. The chain is Shiga-like toxin 1 subunit A (stxA) from Escherichia coli (Bacteriophage H19B).